The primary structure comprises 232 residues: Multiple organellar RNA editing factor 6, mitochondrial (232 aa).

Residues 1 to 67 (MAKTLSRSTA…TIRTRMDRSG (67 aa)) constitute a mitochondrion transit peptide. The interval 208 to 232 (TNQRGSDKPKYHDRIRNVRRRENMR) is disordered. Basic and acidic residues predominate over residues 212–232 (GSDKPKYHDRIRNVRRRENMR).

The protein belongs to the MORF family. In terms of assembly, heterodimers with MORF8/RIP1, MORF3/RIP3, MORF6/RIP6, MORF7/RIP7 and MORF9/RIP9.

It is found in the mitochondrion. Functionally, involved in organellar RNA editing. Required for the processing of few RNA editing sites in mitochondria. This is Multiple organellar RNA editing factor 6, mitochondrial from Arabidopsis thaliana (Mouse-ear cress).